Here is a 485-residue protein sequence, read N- to C-terminus: GlcNAc-binding protein A (485 aa).

Positions 1–29 (MKKQPQKTLLAIALSVVSGTAMSHGYVSA) are cleaved as a signal peptide. The Chitin-binding type-4 domain maps to 30-200 (VENGVAEARV…SFYNVIDVKF (171 aa)). Residues 437-478 (ADTKVLASDGAIYQCKPFPYSGYCVQWTPTATQYQPGTGSHW) form the Chitin-binding type-3 domain.

The protein belongs to the GbpA family.

Its subcellular location is the secreted. Probably interacts with GlcNAc residues. May promote attachment to both epithelial cell surfaces and chitin. The sequence is that of GlcNAc-binding protein A from Vibrio vulnificus (strain CMCP6).